The sequence spans 391 residues: 3-ketoacyl-CoA thiolase (391 aa).

The Acyl-thioester intermediate role is filled by Cys95. Active-site proton acceptor residues include His347 and Cys377.

This sequence belongs to the thiolase-like superfamily. Thiolase family. Heterotetramer of two alpha chains (FadB) and two beta chains (FadA).

The protein localises to the cytoplasm. The catalysed reaction is an acyl-CoA + acetyl-CoA = a 3-oxoacyl-CoA + CoA. It participates in lipid metabolism; fatty acid beta-oxidation. Its function is as follows. Catalyzes the final step of fatty acid oxidation in which acetyl-CoA is released and the CoA ester of a fatty acid two carbons shorter is formed. This chain is 3-ketoacyl-CoA thiolase, found in Pseudomonas putida (strain ATCC 47054 / DSM 6125 / CFBP 8728 / NCIMB 11950 / KT2440).